The following is a 335-amino-acid chain: MSWFTPEVIDVILTVVKAIVILLAVVIAGALLSFVERRLLGWWQDRYGPNRVGPFGMFQIAADMLKMFFKEDWTPPFADKVIFTLAPVVAMSALLIAFAIIPITPTWGVADLNIGLLFFFAMAGLSVYAVLFAGWSSNNKFALLGSLRASAQTVSYEVFMGLALMGIVVQVGSFNMRDIVEYQAQNLWFIIPQFFGFCTFFIAGVAVTHRHPFDQPEAEQELADGYHIEYAGMKWGMFFVGEYIGIILISALLVTLFFGGWHGPFGILPQLSFVWFALKTAFFIMLFILLRASIPRPRYDQVMDFSWKFCLPLTLINLLITAAVVLWNTPAVAVQ.

The next 8 helical transmembrane spans lie at 11–31 (VILT…AGAL), 81–101 (VIFT…FAII), 114–134 (IGLL…LFAG), 154–174 (VSYE…VGSF), 187–207 (LWFI…GVAV), 238–258 (FFVG…TLFF), 270–290 (QLSF…FILL), and 307–327 (WKFC…VVLW).

It belongs to the complex I subunit 1 family. In terms of assembly, NDH-1 is composed of 13 different subunits. Subunits NuoA, H, J, K, L, M, N constitute the membrane sector of the complex.

The protein resides in the cell inner membrane. It carries out the reaction a quinone + NADH + 5 H(+)(in) = a quinol + NAD(+) + 4 H(+)(out). Its function is as follows. NDH-1 shuttles electrons from NADH, via FMN and iron-sulfur (Fe-S) centers, to quinones in the respiratory chain. The immediate electron acceptor for the enzyme in this species is believed to be ubiquinone. Couples the redox reaction to proton translocation (for every two electrons transferred, four hydrogen ions are translocated across the cytoplasmic membrane), and thus conserves the redox energy in a proton gradient. This subunit may bind ubiquinone. In Pseudomonas fluorescens (strain ATCC BAA-477 / NRRL B-23932 / Pf-5), this protein is NADH-quinone oxidoreductase subunit H.